Consider the following 1288-residue polypeptide: Disease resistance protein RRS1 (1288 aa).

The region spanning 5 to 146 (EKDEEFVCIS…EIVRDVYETH (142 aa)) is the TIR domain. Residues 25–26 (SH) form an important for interaction with RPS4 region. The NB-ARC domain maps to 170–421 (IGIRCVGIWG…LLEGCGFFPH (252 aa)). An ATP-binding site is contributed by 179-186 (GMPGIGKT). LRR repeat units follow at residues 498–522 (SEEI…AFKN), 535–553 (NPEV…HSLP), 554–575 (NELR…NFDP), 577–598 (HLVE…TKNL), 621–646 (AENL…RLLR), 665–688 (PPNI…TVKP), 697–720 (LTEI…NSSC), 740–764 (LPNM…SIQG), 766–791 (PRFL…SLEI), 792–807 (LNAH…NMAN), 808–829 (LEFL…QGFP), and 830–852 (RNLK…PLSL). The Nuclear localization signal motif lies at 986–1003 (RKFHCWAPWQVVPKVRKD). The segment at residues 1202–1270 (IPAIDEGDLW…YLSEHNHPRP (69 aa)) is a DNA-binding region (WRKY). Residues 1267 to 1288 (HPRPTKRKALADSTRSTSSSIC) form a disordered region. Polar residues predominate over residues 1279 to 1288 (STRSTSSSIC).

This sequence belongs to the disease resistance TIR-NB-LRR family. In terms of assembly, interacts with PopP2, a R.solanacearum type III effector. Interacts with RPS4.

The protein localises to the nucleus. Its subcellular location is the cytoplasm. Its function is as follows. Transcription factor. Interacts specifically with the W box (5'-(T)TGAC[CT]-3'), a frequently occurring elicitor-responsive cis-acting element. Also acts as a disease resistance protein involved in resistance to fungal and bacterial pathogens, including R.solanacearum, P.syringae pv. tomato and C.higginsianum. Heterodimerization with RPS4 is required to form a functional complex to recognize AvrRps4 and PopP2. Contributes to temperature-conditioned RPS4 auto-immunity. This chain is Disease resistance protein RRS1, found in Arabidopsis thaliana (Mouse-ear cress).